We begin with the raw amino-acid sequence, 258 residues long: UPF0246 protein CGSHiGG_08495 (258 aa).

The protein belongs to the UPF0246 family.

The chain is UPF0246 protein CGSHiGG_08495 from Haemophilus influenzae (strain PittGG).